A 1073-amino-acid chain; its full sequence is Activated Cdc42 kinase Ack (1073 aa).

Positions 88-110 (IGGGKQPSSKKQSSAARESSQGN) are disordered. The Protein kinase domain occupies 123 to 383 (ITMGLKLGDG…PTFAALKEYL (261 aa)). ATP-binding positions include 129–137 (LGDGSFGVV) and Lys-156. The active-site Proton acceptor is Asp-250. An SH3 domain is found at 386 to 446 (MSPPVMRASR…PRNLLEQRKV (61 aa)). Disordered regions lie at residues 484–506 (QRKCASMTNQPHAKERKSTSSKQ), 803–834 (PLKNGAAPGSVHSNHSSPSSTASPKQNNVEAA), and 862–882 (AQPPTEQAEEQIYQNHRHQQQ). Low complexity predominate over residues 812–826 (SVHSNHSSPSSTASP). In terms of domain architecture, UBA spans 1029-1072 (GLATRHYKIDQLARLGVAGRPQCEQALQQTNWSLEVAAELLLNA).

Belongs to the protein kinase superfamily. Tyr protein kinase family. Interacts with yki and ex. Interacts with drk. Likely to be a member of an axonal guidance receptor complex that includes SH3PX1, dock and Dscam. Interacts (via N-terminus) with dock. Interacts with SH3PX1 (via SH3 domain). The cofactor is Mg(2+). Post-translationally, phosphorylated. Autophosphorylated. In terms of tissue distribution, detected in ovaries (at protein level). In adults, relatively higher expression in the head compared to the body.

It is found in the cytoplasm. Its subcellular location is the cytoplasmic vesicle. The protein resides in the clathrin-coated vesicle. It catalyses the reaction L-tyrosyl-[protein] + ATP = O-phospho-L-tyrosyl-[protein] + ADP + H(+). The catalysed reaction is L-threonyl-[protein] + ATP = O-phospho-L-threonyl-[protein] + ADP + H(+). Non-receptor tyrosine-protein and serine/threonine-protein kinase that is implicated in diverse biological functions such as cell survival, cell differentiation, cell growth and proliferation. Phosphorylates SH3PX1 and ex. Phosphorylates SH3PX1 predominantly on 'Tyr-56', which likely promotes the recruitment of SH3PX1 to an axonal guidance receptor complex that includes dock and Dscam; because phosphorylation of SH3PX1 increases its interaction with the complex member dock while decreasing its interaction with the actin cytoskeleton modulator WASp. In the wing and eye, promotes tissue growth, and during embryogenesis coordinates cell shape changes required for correct dorsal closure. Functions in the negative regulation of the Hippo/SWH (Sav/Wts/Hpo) signaling pathway by enhancing yki activity thereby promoting cell proliferation and inhibiting apoptosis. This is accomplished, at least in part, by phosphorylating ex thereby reducing its ability to efficiently activate the Hippo signaling cascade. In the eye disk, wing disk and possibly spermatids, inhibits programmed cell death induced by hid and rpr through a mechanism that is independent of the MAP kinase signal transduction pathway. Essential for male and female fertility. During oogenesis required for the correct temporal assembly, and consequently the catalytic activity of long Ctps filaments (cytoophidium) in the germline nurse cells, likely by phosphorylating an unidentified substrate that is essential for linking individual Ctps filaments into large, catalytically active assemblies. The sequence is that of Activated Cdc42 kinase Ack from Drosophila melanogaster (Fruit fly).